The chain runs to 173 residues: T cell receptor gamma constant 1 (173 aa).

Positions 10 to 104 (PKPTIFLPSI…NKNGVDQEII (95 aa)) constitute an Ig-like domain. Residues C32 and C88 are joined by a disulfide bond. Residues N66, N120, N126, and N135 are each glycosylated (N-linked (GlcNAc...) asparagine). Residues 139-161 (YYMYLLLLLKSVVYFAIITCCLL) traverse the membrane as a helical segment.

As to quaternary structure, gamma-delta TR is a heterodimer composed of a gamma and delta chain; disulfide-linked. The gamma-delta TR is associated with the transmembrane signaling CD3 coreceptor proteins following the stoichiometry: a single gamma-delta TR heterodimer associates with one CD3D-CD3E heterodimer, one CD3G-CD3E heterodimer and one CD247 homodimer forming a stable octameric structure. Upon activation, gamma-delta TR complex associates with FCER1G to initiate intracellular signaling.

The protein localises to the cell membrane. Constant region of T cell receptor (TR) gamma chain that participates in the antigen recognition. Gamma-delta TRs recognize a variety of self and foreign non-peptide antigens frequently expressed at the epithelial boundaries between the host and external environment, including endogenous lipids presented by MH-like protein CD1D and phosphoantigens presented by butyrophilin-like molecule BTN3A1. Upon antigen recognition induces rapid, innate-like immune responses involved in pathogen clearance and tissue repair. Binding of gamma-delta TR complex to antigen triggers phosphorylation of immunoreceptor tyrosine-based activation motifs (ITAMs) in the CD3 chains by the LCK and FYN kinases, allowing the recruitment, phosphorylation, and activation of ZAP70 that facilitates phosphorylation of the scaffolding proteins LCP2 and LAT. This lead to the formation of a supramolecular signalosome that recruits the phospholipase PLCG1, resulting in calcium mobilization and ERK activation, ultimately leading to T cell expansion and differentiation into effector cells. Gamma-delta TRs are produced through somatic rearrangement of a limited repertoire of variable (V), diversity (D), and joining (J) genes. The potential diversity of gamma-delta TRs is conferred by the unique ability to rearrange (D) genes in tandem and to utilize all three reading frames. The combinatorial diversity is considerably increased by the sequence exonuclease trimming and random nucleotide (N) region additions which occur during the V-(D)-J rearrangements. This Homo sapiens (Human) protein is T cell receptor gamma constant 1.